A 139-amino-acid chain; its full sequence is D-ribose pyranase (139 aa).

Histidine 20 (proton donor) is an active-site residue. Residues aspartate 28, histidine 106, and 128–130 each bind substrate; that span reads YAN.

This sequence belongs to the RbsD / FucU family. RbsD subfamily. Homodecamer.

The protein localises to the cytoplasm. It carries out the reaction beta-D-ribopyranose = beta-D-ribofuranose. It participates in carbohydrate metabolism; D-ribose degradation; D-ribose 5-phosphate from beta-D-ribopyranose: step 1/2. Functionally, catalyzes the interconversion of beta-pyran and beta-furan forms of D-ribose. This Salmonella paratyphi B (strain ATCC BAA-1250 / SPB7) protein is D-ribose pyranase.